We begin with the raw amino-acid sequence, 640 residues long: 1-deoxy-D-xylulose-5-phosphate synthase (640 aa).

Thiamine diphosphate-binding positions include H79 and 120–122 (GHS). Mg(2+) is bound at residue D151. Thiamine diphosphate contacts are provided by residues 152 to 153 (GG), N180, Y288, and E372. N180 serves as a coordination point for Mg(2+).

This sequence belongs to the transketolase family. DXPS subfamily. In terms of assembly, homodimer. Requires Mg(2+) as cofactor. Thiamine diphosphate is required as a cofactor.

The catalysed reaction is D-glyceraldehyde 3-phosphate + pyruvate + H(+) = 1-deoxy-D-xylulose 5-phosphate + CO2. Its pathway is metabolic intermediate biosynthesis; 1-deoxy-D-xylulose 5-phosphate biosynthesis; 1-deoxy-D-xylulose 5-phosphate from D-glyceraldehyde 3-phosphate and pyruvate: step 1/1. In terms of biological role, catalyzes the acyloin condensation reaction between C atoms 2 and 3 of pyruvate and glyceraldehyde 3-phosphate to yield 1-deoxy-D-xylulose-5-phosphate (DXP). In Nitrosococcus oceani (strain ATCC 19707 / BCRC 17464 / JCM 30415 / NCIMB 11848 / C-107), this protein is 1-deoxy-D-xylulose-5-phosphate synthase.